Reading from the N-terminus, the 723-residue chain is Aminodeoxychorismate synthase (723 aa).

Residues 2-195 (RTLLVDNYDS…RDLTERHGRT (194 aa)) enclose the Glutamine amidotransferase type-1 domain. Cys-82 (nucleophile) is an active-site residue. The tract at residues 96–117 (VGRAPEPRHGRTSAVRHDGTGL) is disordered. Over residues 98–114 (RAPEPRHGRTSAVRHDG) the composition is skewed to basic and acidic residues. Active-site residues include His-169 and Glu-171. 2 disordered regions span residues 192-219 (HGRT…KATT) and 693-723 (FPGR…VLPG). Residues 255 to 723 (LDSSRPGGEL…GAPKDLVLPG (469 aa)) form a PABB component region. A compositionally biased stretch (basic and acidic residues) spans 695–704 (GRERPGKDLD).

The protein in the C-terminal section; belongs to the anthranilate synthase component I family.

It carries out the reaction chorismate + L-glutamine = 4-amino-4-deoxychorismate + L-glutamate. Its pathway is antibiotic biosynthesis; candicidin biosynthesis. Its function is as follows. Involved in candicidin biosynthesis. Catalyzes the biosynthesis of 4-amino-4-deoxychorismate (ADC) from chorismate and glutamine. The chain is Aminodeoxychorismate synthase from Streptomyces griseus.